The primary structure comprises 492 residues: N-succinylglutamate 5-semialdehyde dehydrogenase (492 aa).

220 to 225 (GSANTG) provides a ligand contact to NAD(+). Active-site residues include E243 and C277.

The protein belongs to the aldehyde dehydrogenase family. AstD subfamily.

The catalysed reaction is N-succinyl-L-glutamate 5-semialdehyde + NAD(+) + H2O = N-succinyl-L-glutamate + NADH + 2 H(+). It functions in the pathway amino-acid degradation; L-arginine degradation via AST pathway; L-glutamate and succinate from L-arginine: step 4/5. Its function is as follows. Catalyzes the NAD-dependent reduction of succinylglutamate semialdehyde into succinylglutamate. The sequence is that of N-succinylglutamate 5-semialdehyde dehydrogenase from Shigella flexneri.